A 331-amino-acid chain; its full sequence is Ferredoxin--NADP reductase (331 aa).

The FAD site is built by glutamate 38, glutamine 46, tyrosine 51, alanine 91, leucine 125, aspartate 282, and serine 323.

It belongs to the ferredoxin--NADP reductase type 2 family. Homodimer. Requires FAD as cofactor.

The enzyme catalyses 2 reduced [2Fe-2S]-[ferredoxin] + NADP(+) + H(+) = 2 oxidized [2Fe-2S]-[ferredoxin] + NADPH. The polypeptide is Ferredoxin--NADP reductase (Deinococcus geothermalis (strain DSM 11300 / CIP 105573 / AG-3a)).